Here is a 535-residue protein sequence, read N- to C-terminus: UDP-glucuronosyltransferase 1A1 (535 aa).

Residues 1–29 (MSVVCRSSCSLLLLPCLLLCVLGPSASHA) form the signal peptide. Residues Asn89, Asn297, and Asn435 are each glycosylated (N-linked (GlcNAc...) asparagine). A helical transmembrane segment spans residues 493-509 (VIGFLLAIVLTVVFIVY).

The protein belongs to the UDP-glycosyltransferase family. As to quaternary structure, homodimers. Homooligomer. Interacts with UGT1A3, UGT1A4, UGT1A6, UGT1A7, UGT1A8, UGT1A9 and UGT1A10 to form heterodimers.

It localises to the endoplasmic reticulum membrane. It catalyses the reaction glucuronate acceptor + UDP-alpha-D-glucuronate = acceptor beta-D-glucuronoside + UDP + H(+). The enzyme catalyses 17beta-estradiol + UDP-alpha-D-glucuronate = 17beta-estradiol 3-O-(beta-D-glucuronate) + UDP + H(+). The catalysed reaction is 2-hydroxyestrone + UDP-alpha-D-glucuronate = 2-hydroxyestrone 3-O-(beta-D-glucuronate) + UDP + H(+). It carries out the reaction 2-hydroxy-17beta-estradiol + UDP-alpha-D-glucuronate = 2-hydroxy-17beta-estradiol 3-O-(beta-D-glucuronate) + UDP + H(+). It catalyses the reaction 2-methoxy-17beta-estradiol + UDP-alpha-D-glucuronate = 2-methoxy-17beta-estradiol 3-O-(beta-D-glucuronate) + UDP + H(+). The enzyme catalyses 17alpha-estradiol + UDP-alpha-D-glucuronate = 17alpha-estradiol 3-O-(beta-D-glucuronate) + UDP + H(+). The catalysed reaction is 16beta,17beta-estriol + UDP-alpha-D-glucuronate = 16beta,17beta-estriol 16-O-(beta-D-glucuronate) + UDP + H(+). It carries out the reaction losartan + UDP-alpha-D-glucuronate = losartan-2-N-beta-D-glucuronide + UDP. It catalyses the reaction prunetin + UDP-alpha-D-glucuronate = prunetin-4'-O-beta-D-glucuronide + UDP. The enzyme catalyses SN-38 + UDP-alpha-D-glucuronate = SN-38 O-beta-D-glucuronide + UDP + H(+). The catalysed reaction is (4Z,15Z)-bilirubin IXalpha + UDP-alpha-D-glucuronate = (4Z,15Z)-bilirubin IXalpha C12-beta-D-glucuronoside + UDP. It carries out the reaction (4Z,15Z)-bilirubin IXalpha + UDP-alpha-D-glucuronate = (4Z,15Z)-bilirubin IXalpha C8-beta-D-glucuronoside + UDP. It catalyses the reaction (4Z,15Z)-bilirubin IXalpha C8-beta-D-glucuronoside + UDP-alpha-D-glucuronate = (4Z,15Z)-bilirubin IXalpha C8,C12-beta-D-bisglucuronoside + UDP. The enzyme catalyses (4Z,15Z)-bilirubin IXalpha C12-beta-D-glucuronoside + UDP-alpha-D-glucuronate = (4Z,15Z)-bilirubin IXalpha C8,C12-beta-D-bisglucuronoside + UDP. The catalysed reaction is 8-iso-prostaglandin F2alpha + UDP-alpha-D-glucuronate = 8-iso-prostaglandin F2alpha-glucuronide + UDP + H(+). It carries out the reaction (5Z,8Z,11Z,14Z)-eicosatetraenoate + UDP-alpha-D-glucuronate = O-[(5Z),(8Z),(11Z),(14Z)-eicosatetraenoyl]-beta-D-glucuronate + UDP. It catalyses the reaction 15-hydroxy-(5Z,8Z,11Z,13E)-eicosatetraenoate + UDP-alpha-D-glucuronate = 15-O-(beta-D-glucuronosyl)-(5Z,8Z,11Z,14Z)-eicosatetraenoate + UDP + H(+). The enzyme catalyses 20-hydroxy-(5Z,8Z,11Z,14Z)-eicosatetraenoate + UDP-alpha-D-glucuronate = 20-O-(beta-D-glucuronosyl)-(5Z,8Z,11Z,14Z)-eicosatetraenoate + UDP + H(+). The catalysed reaction is prostaglandin B1 + UDP-alpha-D-glucuronate = 15-O-(beta-D-glucuronosyl)-prostaglandin B1 + UDP + H(+). It carries out the reaction (E)-ferulate + UDP-alpha-D-glucuronate = (E)-4-O-(beta-D-glucuronosyl)-ferulate + UDP + H(+). It catalyses the reaction (E)-ferulate + UDP-alpha-D-glucuronate = (E)-ferulic acid beta-D-glucuronate ester + UDP. In terms of biological role, UDP-glucuronosyltransferase (UGT) that catalyzes phase II biotransformation reactions in which lipophilic substrates are conjugated with glucuronic acid to increase the metabolite's water solubility, thereby facilitating excretion into either the urine or bile. Essential for the elimination and detoxification of drugs, xenobiotics and endogenous compounds. Catalyzes the glucuronidation of endogenous estrogen hormones such as estradiol, estrone and estriol. Involved in the glucuronidation of bilirubin, a degradation product occurring in the normal catabolic pathway that breaks down heme in vertebrates. Involved in the glucuronidation of arachidonic acid (AA) and AA-derived eicosanoids including 15-HETE, 20-HETE, PGB1 and F2-isoprostane (8-iso-PGF2alpha). Involved in the glucuronidation of the phytochemical ferulic acid at the phenolic or the carboxylic acid group. Also catalyzes the glucuronidation the isoflavones genistein, daidzein, glycitein, formononetin, biochanin A and prunetin, which are phytoestrogens with anticancer and cardiovascular properties. Involved in the glucuronidation of the AGTR1 angiotensin receptor antagonist losartan, a drug which can inhibit the effect of angiotensin II. Involved in the biotransformation of 7-ethyl-10-hydroxycamptothecin (SN-38), the pharmacologically active metabolite of the anticancer drug irinotecan. The protein is UDP-glucuronosyltransferase 1A1 of Rattus norvegicus (Rat).